Here is a 23-residue protein sequence, read N- to C-terminus: Benzaldehyde dehydrogenase [NAD(+)] I (23 aa).

This sequence belongs to the aldehyde dehydrogenase family. Homotetramer.

It carries out the reaction benzaldehyde + NAD(+) + H2O = benzoate + NADH + 2 H(+). The polypeptide is Benzaldehyde dehydrogenase [NAD(+)] I (Acinetobacter guillouiae (Acinetobacter genomosp. 11)).